Consider the following 393-residue polypeptide: Beta-1,4-galactosyltransferase 3 (393 aa).

The Cytoplasmic portion of the chain corresponds to 1–10 (MLRRLLERPC). A helical; Signal-anchor for type II membrane protein transmembrane segment spans residues 11–31 (TLALLVGSQLAVMMYLSLGGF). Residues 32–393 (RSLSALFGRD…ANHTALRGSH (362 aa)) are Lumenal-facing. Residue asparagine 57 is glycosylated (N-linked (GlcNAc...) asparagine). The cysteines at positions 77 and 119 are disulfide-linked. 130–134 (PHRAR) contributes to the UDP-alpha-D-galactose binding site. An N-linked (GlcNAc...) asparagine glycan is attached at asparagine 166. Residues 169 to 171 (FNR), 196 to 197 (VD), tyrosine 226, and tryptophan 258 each bind UDP-alpha-D-galactose. Cysteine 190 and cysteine 209 form a disulfide bridge. Aspartate 197 serves as a coordination point for Mn(2+). 260 to 263 (GEDD) contacts N-acetyl-D-glucosamine. Residue histidine 291 participates in Mn(2+) binding. Position 291–293 (291–293 (HRG)) interacts with UDP-alpha-D-galactose. Arginine 303 is an N-acetyl-D-glucosamine binding site. Asparagine 337 and asparagine 385 each carry an N-linked (GlcNAc...) asparagine glycan. The interval 339-393 (TADIGTDPRGPRAPSGPRYPPGSSQAFRQEMLQRRPPARPGPPPTANHTALRGSH) is disordered.

This sequence belongs to the glycosyltransferase 7 family. Mn(2+) serves as cofactor.

Its subcellular location is the golgi apparatus. It is found in the golgi stack membrane. It carries out the reaction an N-acetyl-beta-D-glucosaminyl derivative + UDP-alpha-D-galactose = a beta-D-galactosyl-(1-&gt;4)-N-acetyl-beta-D-glucosaminyl derivative + UDP + H(+). It catalyses the reaction N-acetyl-D-glucosamine + UDP-alpha-D-galactose = beta-D-galactosyl-(1-&gt;4)-N-acetyl-D-glucosamine + UDP + H(+). The enzyme catalyses a beta-D-GlcNAc-(1-&gt;3)-beta-D-Gal-(1-&gt;4)-beta-D-Glc-(1&lt;-&gt;1)-Cer(d18:1(4E)) + UDP-alpha-D-galactose = a neolactoside nLc4Cer(d18:1(4E)) + UDP + H(+). The catalysed reaction is a beta-D-glucosylceramide + UDP-alpha-D-galactose = a beta-D-galactosyl-(1-&gt;4)-beta-D-glucosyl-(1&lt;-&gt;1)-ceramide + UDP + H(+). It carries out the reaction a neolactoside IV(3)-beta-GlcNAc-nLc4Cer + UDP-alpha-D-galactose = a neolactoside nLc6Cer + UDP + H(+). Its pathway is protein modification; protein glycosylation. In terms of biological role, responsible for the synthesis of complex-type N-linked oligosaccharides in many glycoproteins as well as the carbohydrate moieties of glycolipids. The protein is Beta-1,4-galactosyltransferase 3 (B4GALT3) of Pongo abelii (Sumatran orangutan).